Consider the following 163-residue polypeptide: Protein NAG1 (163 aa).

Residues 76 to 96 form a helical membrane-spanning segment; sequence ACFSVRIVLPLSLTISISALM.

The protein resides in the membrane. In terms of biological role, involved in yeast cell wall biogenesis. This chain is Protein NAG1 (NAG1), found in Saccharomyces cerevisiae (strain ATCC 204508 / S288c) (Baker's yeast).